A 269-amino-acid polypeptide reads, in one-letter code: Glutamate racemase (269 aa).

Substrate is bound by residues 7–8 and 39–40; these read DS and YG. C70 (proton donor/acceptor) is an active-site residue. 71–72 serves as a coordination point for substrate; sequence NT. C194 (proton donor/acceptor) is an active-site residue. Residue 195–196 coordinates substrate; that stretch reads TH.

The protein belongs to the aspartate/glutamate racemases family.

The enzyme catalyses L-glutamate = D-glutamate. It participates in cell wall biogenesis; peptidoglycan biosynthesis. Its function is as follows. Provides the (R)-glutamate required for cell wall biosynthesis. The chain is Glutamate racemase from Roseobacter denitrificans (strain ATCC 33942 / OCh 114) (Erythrobacter sp. (strain OCh 114)).